The chain runs to 144 residues: Large ribosomal subunit protein uL15 (144 aa).

The interval 1-57 (MLLNTLSPAAGSKHAPKRLGRGVGSGLGKTGGRGHKGQKSRSGGKVRPGFEGGQMPL) is disordered. Residues 21-31 (RGVGSGLGKTG) show a composition bias toward gly residues. Over residues 32–44 (GRGHKGQKSRSGG) the composition is skewed to basic residues.

The protein belongs to the universal ribosomal protein uL15 family. Part of the 50S ribosomal subunit.

In terms of biological role, binds to the 23S rRNA. In Vibrio cholerae serotype O1 (strain ATCC 39541 / Classical Ogawa 395 / O395), this protein is Large ribosomal subunit protein uL15.